We begin with the raw amino-acid sequence, 396 residues long: N-acetylglucosamine-6-phosphate deacetylase (396 aa).

Fe cation is bound by residues H63, H65, and E136. Position 147–148 (147–148) interacts with substrate; the sequence is AQ. Residues H202 and H223 each coordinate Fe cation. Substrate-binding positions include 226 to 227, R234, and 255 to 258; these read NA and DGIH. D281 is a binding site for Fe cation. D281 functions as the Proton donor in the catalytic mechanism. 314–316 is a binding site for substrate; sequence LAG.

Belongs to the metallo-dependent hydrolases superfamily. NagA family. In terms of assembly, homodimer. A divalent metal cation serves as cofactor.

The enzyme catalyses N-acetyl-D-glucosamine 6-phosphate + H2O = D-glucosamine 6-phosphate + acetate. It participates in amino-sugar metabolism; N-acetylneuraminate degradation; D-fructose 6-phosphate from N-acetylneuraminate: step 4/5. Functionally, involved in the first committed step in the biosynthesis of amino-sugar-nucleotides. Catalyzes the hydrolysis of the N-acetyl group of N-acetylglucosamine-6-phosphate (GlcNAc-6-P) to yield glucosamine 6-phosphate and acetate. Essential for growth on N-acetylglucosamine. The protein is N-acetylglucosamine-6-phosphate deacetylase (nagA) of Bacillus subtilis (strain 168).